A 593-amino-acid polypeptide reads, in one-letter code: METETETPNGSTPCPTSAPSAIPLRPSSCDGTMGRHLARRLVEIGVRDVFSVPGDFNLTLLDHLIAEPELNLVGCCNELNAGYAADGYGRAKGVGACVVTFTVGGLSILNAIAGAYSENLPVICIVGGPNSNDYGTNRILHHTIGLPDFSQELQCFQTITCFQAVVNNLDDAHELIDTAISTALKESKPVYISIGCNLPAIPHPTFARDPVPFFLAPRVSNQAGLEAAVEEAAAFLNKAVKPVIVGGPKLRVAKAQKAFMEFAEASGYPIAVMPSGKGLVPENHPHFIGTYWGAVSTSYCGEIVESADAYVFVGPIFNDYSSVGYSLLIKKEKSLIVQPNRVTIGNGLSLGWVFMADFLTALAKKVKTNTTAVENYRRIYVPPGIPLKREKDEPLRVNVLFKHIQALISGDTAVIAETGDSWFNCQKLRLPENCGYEFQMQYGSIGWSVGATLGYAQAATDKRVIACIGDGSFQVTAQDISTMIRCGQRSIIFLINNGGYTIEVEIHDGPYNVIKNWDYTGFVSAIHNGQGKCWTAKVRTEEDLTEAIATATGAEKDSLCFIEVFAHKDDTSKELLEWGSRVAAANSRPPNPQ.

The span at 1-19 (METETETPNGSTPCPTSAP) shows a compositional bias: polar residues. The tract at residues 1–20 (METETETPNGSTPCPTSAPS) is disordered. Residues D55 and H142 each coordinate substrate. Positions 420–502 (DSWFNCQKLR…FLINNGGYTI (83 aa)) are thiamine pyrophosphate binding. Residues D470, N497, and G499 each contribute to the Mg(2+) site. Substrate is bound at residue E503.

The protein belongs to the TPP enzyme family. Homotetramer. It depends on a metal cation as a cofactor. Requires thiamine diphosphate as cofactor.

It catalyses the reaction a 2-oxocarboxylate + H(+) = an aldehyde + CO2. This Pisum sativum (Garden pea) protein is Pyruvate decarboxylase 1 (PDC1).